Reading from the N-terminus, the 131-residue chain is Superoxide dismutase [Ni] (131 aa).

A propeptide spanning residues 1 to 14 (MLSRLFAPKVTVSA) is cleaved from the precursor. Residues histidine 15, cysteine 16, and cysteine 20 each coordinate Ni(2+).

This sequence belongs to the nickel superoxide dismutase family. As to quaternary structure, homohexamer. The hexameric protein has a roughly the shape of a hollow sphere with an outer diameter of 60 angstroms and a large interior cavity. Ni(2+) is required as a cofactor.

Its subcellular location is the cytoplasm. It catalyses the reaction 2 superoxide + 2 H(+) = H2O2 + O2. The polypeptide is Superoxide dismutase [Ni] (sodN) (Streptomyces coelicolor (strain ATCC BAA-471 / A3(2) / M145)).